The primary structure comprises 65 residues: uncharacterized protein (65 aa).

This is an uncharacterized protein from Pasteurella multocida (strain Pm70).